A 555-amino-acid polypeptide reads, in one-letter code: Wee1-like protein kinase 2-A (555 aa).

Disordered regions lie at residues 1–81 (MRTA…SVGA) and 149–175 (FTPESYRQTHFQPNGKRKERPEDDCRT). Residues 38-48 (SPVSSWRTNNC) show a composition bias toward polar residues. Low complexity predominate over residues 68-78 (SPSSDYSPDPS). The segment covering 149–160 (FTPESYRQTHFQ) has biased composition (polar residues). Residues 210 to 480 (FLEIEKIGAG…AASLAKNSVL (271 aa)) enclose the Protein kinase domain. ATP is bound by residues 216–224 (IGAGEFGSV) and Lys-239. The active-site Proton acceptor is the Asp-337. 2 residues coordinate Mg(2+): Asn-342 and Asp-374. Residues 487 to 513 (AAQLQKQLNVEKFKTAMLERELKAAKL) are a coiled coil. Ser-549 carries the post-translational modification Phosphoserine.

This sequence belongs to the protein kinase superfamily. Ser/Thr protein kinase family. WEE1 subfamily. Interacts with prmt5; this promotes protesomal degradation of wee2-a in the nucleus. The interaction with prmt5 is disrupted upon activation of the DNA replication checkpoint. Post-translationally, subject to proteasomal degradation in the nucleus. Detected in egg (at protein level). Oocyte-specific maternally supplied protein. Present in immature and mature oocytes and in early (pregastrula) embryos, but not in post-gastrula embryos.

The protein localises to the nucleus. It is found in the cytoplasm. The protein resides in the cytosol. The catalysed reaction is L-tyrosyl-[protein] + ATP = O-phospho-L-tyrosyl-[protein] + ADP + H(+). Its function is as follows. Oocyte-specific protein tyrosine kinase that phosphorylates and inhibits cdk1 and acts as a key regulator of meiosis. Required to maintain meiotic arrest in oocytes by phosphorylating cdk1 at 'Tyr-15', which inhibits cdk1 activity and prevents meiotic reentry. Negative regulator of mitosis. Involved in the mitotic DNA replication checkpoint. In Xenopus laevis (African clawed frog), this protein is Wee1-like protein kinase 2-A (wee2-a).